A 248-amino-acid polypeptide reads, in one-letter code: Granzyme B (248 aa).

The N-terminal stretch at 1–18 (MKLLLLLLSFSLAPKTEA) is a signal peptide. Residues 19-20 (GE) constitute a propeptide, activation peptide. The region spanning 21–246 (IIGGHEAKPH…FLSWIKKTMK (226 aa)) is the Peptidase S1 domain. A disulfide bridge connects residues cysteine 50 and cysteine 66. Catalysis depends on charge relay system residues histidine 65 and aspartate 109. 2 disulfide bridges follow: cysteine 143/cysteine 210 and cysteine 174/cysteine 189. Serine 204 serves as the catalytic Charge relay system.

This sequence belongs to the peptidase S1 family. Granzyme subfamily.

The protein resides in the secreted. It is found in the cytolytic granule. It carries out the reaction Preferential cleavage: -Asp-|-Xaa- &gt;&gt; -Asn-|-Xaa- &gt; -Met-|-Xaa-, -Ser-|-Xaa-.. Inactivated by the serine protease inhibitor diisopropylfluorophosphate. In terms of biological role, abundant protease in the cytosolic granules of cytotoxic T-cells and NK-cells which activates caspase-independent pyroptosis when delivered into the target cell through the immunological synapse. It cleaves after Asp. Once delivered into the target cell, acts by catalyzing cleavage of gasdermin-E (GSDME), releasing the pore-forming moiety of GSDME, thereby triggering pyroptosis and target cell death. Seems to be linked to an activation cascade of caspases (aspartate-specific cysteine proteases) responsible for apoptosis execution. Cleaves caspase-3 and -9 (CASP3 and CASP9, respectively) to give rise to active enzymes mediating apoptosis. Cleaves and activates CASP7 in response to bacterial infection, promoting plasma membrane repair. The polypeptide is Granzyme B (Gzmb) (Rattus norvegicus (Rat)).